We begin with the raw amino-acid sequence, 281 residues long: Voltage-dependent L-type calcium channel subunit alpha-1S (281 aa).

An III repeat occupies V1 to F8. The tract at residues V1–K17 is dihydropyridine binding. The stretch at N45–Y281 is one IV repeat. A helical transmembrane segment spans residues Y59–Y80. N81 carries an N-linked (GlcNAc...) asparagine glycan. Residues V89–M110 form a helical membrane-spanning segment. A helical transmembrane segment spans residues P121 to S140. A helical membrane pass occupies residues I153 to G171. Residues Y190–F210 traverse the membrane as a helical segment. The segment at residues A233 to L251 is an intramembrane region (pore-forming). The Selectivity filter of repeat IV signature appears at T242–A245. Residues R258–Y281 form a dihydropyridine binding region. C259 and C273 are oxidised to a cystine. The segment at E270–Y281 is phenylalkylamine binding.

This sequence belongs to the calcium channel alpha-1 subunit (TC 1.A.1.11) family. CACNA1S subfamily. Component of a calcium channel complex consisting of a pore-forming alpha subunit (CACNA1S) and the ancillary subunits CACNB1 or CACNB2, CACNG1 and CACNA2D1. The channel complex contains alpha, beta, gamma and delta subunits in a 1:1:1:1 ratio, i.e. it contains either CACNB1 or CACNB2. CACNA1S channel activity is modulated by the auxiliary subunits (CACNB1 or CACNB2, CACNG1 and CACNA2D1). Interacts with DYSF and JSRP1. Interacts with RYR1. Interacts with CALM. The alpha-1S subunit is found in two isoforms in the skeletal muscle: a minor form of 212 kDa containing the complete amino acid sequence, and a major form of 190 kDa derived from the full-length form by post-translational proteolysis close to Phe-1690. In terms of processing, both the minor and major forms are phosphorylated in vitro by PKA. Phosphorylation by PKA activates the calcium channel.

The protein localises to the cell membrane. Its subcellular location is the sarcolemma. It is found in the T-tubule. The enzyme catalyses Ca(2+)(in) = Ca(2+)(out). With respect to regulation, channel activity is blocked by dihydropyridines (DHP), phenylalkylamines, and by benzothiazepines. Pore-forming, alpha-1S subunit of the voltage-gated calcium channel that gives rise to L-type calcium currents in skeletal muscle. Calcium channels containing the alpha-1S subunit play an important role in excitation-contraction coupling in skeletal muscle via their interaction with RYR1, which triggers Ca(2+) release from the sarcplasmic reticulum and ultimately results in muscle contraction. Long-lasting (L-type) calcium channels belong to the 'high-voltage activated' (HVA) group. In Gallus gallus (Chicken), this protein is Voltage-dependent L-type calcium channel subunit alpha-1S (CACNA1S).